The following is an 812-amino-acid chain: Lon protease (812 aa).

A Lon N-terminal domain is found at 22-215 (YAVLPLRDIV…KALSFMEAEI (194 aa)). Residue 367-374 (GPPGVGKT) participates in ATP binding. The Lon proteolytic domain occupies 602–783 (EDQVGVVTGL…GEVLKHALVR (182 aa)). Active-site residues include S689 and K732. The disordered stretch occupies residues 787 to 812 (PIEWTEQENPTAVPPVEDEAGASLAH).

It belongs to the peptidase S16 family. In terms of assembly, homohexamer. Organized in a ring with a central cavity.

The protein localises to the cytoplasm. The enzyme catalyses Hydrolysis of proteins in presence of ATP.. Functionally, ATP-dependent serine protease that mediates the selective degradation of mutant and abnormal proteins as well as certain short-lived regulatory proteins. Required for cellular homeostasis and for survival from DNA damage and developmental changes induced by stress. Degrades polypeptides processively to yield small peptide fragments that are 5 to 10 amino acids long. Binds to DNA in a double-stranded, site-specific manner. Required for wild-type virulence during the initial stages of infection in the mouse model, but not essential for the establishment and maintenance of chronic infection in this host. The polypeptide is Lon protease (Brucella abortus (strain 2308)).